The sequence spans 250 residues: Small ribosomal subunit protein uS2 (250 aa).

Residues 225-250 (GAQGGRQARGEDLGAAVEAPSEDALA) are disordered.

It belongs to the universal ribosomal protein uS2 family.

The polypeptide is Small ribosomal subunit protein uS2 (Rhizorhabdus wittichii (strain DSM 6014 / CCUG 31198 / JCM 15750 / NBRC 105917 / EY 4224 / RW1) (Sphingomonas wittichii)).